The sequence spans 346 residues: Phosphoribosylformylglycinamidine cyclo-ligase (346 aa).

Belongs to the AIR synthase family.

It is found in the cytoplasm. The catalysed reaction is 2-formamido-N(1)-(5-O-phospho-beta-D-ribosyl)acetamidine + ATP = 5-amino-1-(5-phospho-beta-D-ribosyl)imidazole + ADP + phosphate + H(+). The protein operates within purine metabolism; IMP biosynthesis via de novo pathway; 5-amino-1-(5-phospho-D-ribosyl)imidazole from N(2)-formyl-N(1)-(5-phospho-D-ribosyl)glycinamide: step 2/2. This is Phosphoribosylformylglycinamidine cyclo-ligase from Photorhabdus laumondii subsp. laumondii (strain DSM 15139 / CIP 105565 / TT01) (Photorhabdus luminescens subsp. laumondii).